The chain runs to 640 residues: Fructose-1,6-bisphosphatase class 3 (640 aa).

The protein belongs to the FBPase class 3 family. It depends on Mn(2+) as a cofactor.

It carries out the reaction beta-D-fructose 1,6-bisphosphate + H2O = beta-D-fructose 6-phosphate + phosphate. The protein operates within carbohydrate biosynthesis; gluconeogenesis. In Lactococcus lactis subsp. lactis (strain IL1403) (Streptococcus lactis), this protein is Fructose-1,6-bisphosphatase class 3.